Here is a 219-residue protein sequence, read N- to C-terminus: Small ribosomal subunit protein uS3 (219 aa).

One can recognise a KH type-2 domain in the interval 38 to 106 (IRTYLKKKLY…KLNLEIKEIK (69 aa)).

It belongs to the universal ribosomal protein uS3 family. As to quaternary structure, part of the 30S ribosomal subunit. Forms a tight complex with proteins S10 and S14.

Binds the lower part of the 30S subunit head. Binds mRNA in the 70S ribosome, positioning it for translation. This Lachnoclostridium phytofermentans (strain ATCC 700394 / DSM 18823 / ISDg) (Clostridium phytofermentans) protein is Small ribosomal subunit protein uS3.